The chain runs to 161 residues: Regulator of ribonuclease activity A (161 aa).

The protein belongs to the RraA family. Homotrimer. Binds to both RNA-binding sites in the C-terminal region of Rne and to RhlB.

Its subcellular location is the cytoplasm. Globally modulates RNA abundance by binding to RNase E (Rne) and regulating its endonucleolytic activity. Can modulate Rne action in a substrate-dependent manner by altering the composition of the degradosome. Modulates RNA-binding and helicase activities of the degradosome. The protein is Regulator of ribonuclease activity A of Shewanella sediminis (strain HAW-EB3).